The following is a 340-amino-acid chain: Protein-glutamate methylesterase/protein-glutamine glutaminase 1 (340 aa).

A Response regulatory domain is found at 5-122; it reads KLFIVDDSAL…KVVSELKEKI (118 aa). Aspartate 56 carries the post-translational modification 4-aspartylphosphate. Residues 148–340 enclose the CheB-type methylesterase domain; that stretch reads GKNGRQLVVI…AIAEEIAANI (193 aa). Residues serine 160, histidine 187, and aspartate 285 contribute to the active site.

The protein belongs to the CheB family. Phosphorylated by CheA. Phosphorylation of the N-terminal regulatory domain activates the methylesterase activity.

It is found in the cytoplasm. The catalysed reaction is [protein]-L-glutamate 5-O-methyl ester + H2O = L-glutamyl-[protein] + methanol + H(+). It carries out the reaction L-glutaminyl-[protein] + H2O = L-glutamyl-[protein] + NH4(+). Its function is as follows. Involved in chemotaxis. Part of a chemotaxis signal transduction system that modulates chemotaxis in response to various stimuli. Catalyzes the demethylation of specific methylglutamate residues introduced into the chemoreceptors (methyl-accepting chemotaxis proteins or MCP) by CheR. Also mediates the irreversible deamidation of specific glutamine residues to glutamic acid. In Carboxydothermus hydrogenoformans (strain ATCC BAA-161 / DSM 6008 / Z-2901), this protein is Protein-glutamate methylesterase/protein-glutamine glutaminase 1.